The chain runs to 745 residues: MQRDYLIRVETESMSDFKRLNSLMIGFVIKGEAHIYDENNMTQCNSGDIFIINHRDLYRFQLQQDGIICYIQFQMKYLADKFDDVHCLYFHLTDATTTKNIHQLRNIMARLVSTHIRHNELSKLTEQQLVIQLLMHMIHYVPRTYHSNQSILNDDKVNQVCDYIELHFHEDLSLSELSEYVGWSESHLSKKFTESLGVGFHHFLNTTRIEHAKLDLTYTDETITDIALQNGFSSAASFARTFKHFTHQTPKQYRGDRPAITENQQSAQHDYHDRELILLLNDYIEEMNHFIEDIEKMNYKEIAFQPTNHQLNQFNHIIQVGYLRNLLNTQYQSQLLTCHHDFQVNEVLAYDVIPYIMKKLNAPFTYDAEISNIFYDIDLCLDFLLDHNFSLTMHLDQYDSRDYIDAFKIFIHHVALHVSHRKDLKFNLYVTTLHTSLIEMIDYFKALFPNGGLYIHLDQATERHLPLLKRLEPHIDHFVFDANSNDAVDFNKMNDDEFKTASQMIINKTNYLIDLMHRHRLKRPLILLNWNTLTGDTFITNGEYFRGGIIIEQLLKLSSKVEGIGYWLNYDLHVSHCKNERDYMNSIELFHQYNGKRPVYFTALLFNKLTSNILYSDDTCIVTGTDSNFQILLYDAKHFNPYLALDNQMNMRATEMIHLNINALEEGMYKIKHFTLDKENGALFNLWRKHHTIHGMDKDSIDYVNRMSFPKLEVYDIDITDTLALNIKMITNGIHLIEVKRYPSS.

Residues 158–256 (NQVCDYIELH…HQTPKQYRGD (99 aa)) form the HTH araC/xylS-type domain. 2 consecutive DNA-binding regions (H-T-H motif) follow at residues 175–196 (SELS…TESL) and 223–246 (ITDI…KHFT).

This is an uncharacterized protein from Staphylococcus aureus (strain COL).